The chain runs to 115 residues: Large ribosomal subunit protein uL18 (115 aa).

The protein belongs to the universal ribosomal protein uL18 family. In terms of assembly, part of the 50S ribosomal subunit; part of the 5S rRNA/L5/L18/L25 subcomplex. Contacts the 5S and 23S rRNAs.

Functionally, this is one of the proteins that bind and probably mediate the attachment of the 5S RNA into the large ribosomal subunit, where it forms part of the central protuberance. The chain is Large ribosomal subunit protein uL18 from Baumannia cicadellinicola subsp. Homalodisca coagulata.